A 609-amino-acid chain; its full sequence is UvrABC system protein C (609 aa).

In terms of domain architecture, GIY-YIG spans 16–94; it reads SSAGVYRMYD…IKQYMPKYNV (79 aa). The region spanning 203–238 is the UVR domain; it reads QQVISTLVAKMEQAAQQQEYEQAARFRDQIMALRKV.

It belongs to the UvrC family. Interacts with UvrB in an incision complex.

Its subcellular location is the cytoplasm. In terms of biological role, the UvrABC repair system catalyzes the recognition and processing of DNA lesions. UvrC both incises the 5' and 3' sides of the lesion. The N-terminal half is responsible for the 3' incision and the C-terminal half is responsible for the 5' incision. The protein is UvrABC system protein C of Shewanella putrefaciens (strain CN-32 / ATCC BAA-453).